Reading from the N-terminus, the 73-residue chain is Myosin-IB light chain (73 aa).

EF-hand domains are found at residues 3–38 (DEKT…GLPM) and 38–73 (MTEA…VDES). Ca(2+)-binding residues include aspartate 16, aspartate 18, aspartate 20, and glutamate 27.

Myosin I is a dimer of a heavy and a light chain. Inability to self-assemble into filaments. Interacts with myoB. Does not interact with myoC or myoD.

Functions as the light chain for myosin-B. Binds calcium with submicromolar affinity and may sense physiological calcium changes. The sequence is that of Myosin-IB light chain (mlcB) from Dictyostelium discoideum (Social amoeba).